Here is a 350-residue protein sequence, read N- to C-terminus: 3-dehydroquinate synthase (350 aa).

NAD(+)-binding positions include 106-110 (GVVGD), 130-131 (TS), K143, and K152. Residues E185, H246, and H263 each contribute to the Zn(2+) site.

It belongs to the sugar phosphate cyclases superfamily. Dehydroquinate synthase family. Requires NAD(+) as cofactor. It depends on Co(2+) as a cofactor. Zn(2+) serves as cofactor.

The protein localises to the cytoplasm. The enzyme catalyses 7-phospho-2-dehydro-3-deoxy-D-arabino-heptonate = 3-dehydroquinate + phosphate. It participates in metabolic intermediate biosynthesis; chorismate biosynthesis; chorismate from D-erythrose 4-phosphate and phosphoenolpyruvate: step 2/7. Functionally, catalyzes the conversion of 3-deoxy-D-arabino-heptulosonate 7-phosphate (DAHP) to dehydroquinate (DHQ). This Clostridium perfringens (strain 13 / Type A) protein is 3-dehydroquinate synthase.